Reading from the N-terminus, the 778-residue chain is Actin-binding LIM protein 1 (778 aa).

LIM zinc-binding domains follow at residues 97 to 156, 156 to 216, 224 to 283, and 283 to 343; these read IHCH…MYGT, TRCH…MSSS, SNCA…LFGV, and VKCE…TKTE. Residue Ser216 is modified to Phosphoserine. A disordered region spans residues 339–370; that stretch reads STKTEEKLRPTRTSSESIYSRPGSSIPGSPGH. Positions 360 to 369 are enriched in low complexity; that stretch reads PGSSIPGSPG. Phosphoserine is present on Ser367. A phosphotyrosine mark is found at Tyr373 and Tyr396. 2 disordered regions span residues 414-510 and 552-597; these read YDDK…QAPK and AAQA…EELL. 3 positions are modified to phosphoserine: Ser422, Ser426, and Ser431. Positions 423–434 are enriched in polar residues; the sequence is LGESPRTLSPTP. The residue at position 433 (Thr433) is a Phosphothreonine. The residue at position 435 (Ser435) is a Phosphoserine. Residue Tyr439 is modified to Phosphotyrosine. Over residues 449-474 the composition is skewed to polar residues; the sequence is RSTSQGSINSPVYSRHSYTPTTSRSP. 5 positions are modified to phosphoserine: Ser452, Ser455, Ser458, Ser498, and Ser587. The stretch at 590-614 forms a coiled coil; sequence EEDDEELLRRRQLQEEQLMKLNSGL. Residue Lys620 forms a Glycyl lysine isopeptide (Lys-Gly) (interchain with G-Cter in SUMO2) linkage. Phosphoserine occurs at positions 640, 655, 677, and 706. The HP domain maps to 710-778; it reads MLEPKIFPYE…NDMKKKAKLF (69 aa).

As to quaternary structure, binds F-actin. Interacts with ABRA. In terms of tissue distribution, detected in liver, heart, skeletal muscle, brain and retina, where it is concentrated in the inner segment and in the outer plexiform layers.

It is found in the cytoplasm. The protein localises to the cytoskeleton. May act as scaffold protein. May play a role in the development of the retina. Has been suggested to play a role in axon guidance. This is Actin-binding LIM protein 1 (ABLIM1) from Homo sapiens (Human).